Reading from the N-terminus, the 319-residue chain is 33 kDa chaperonin (319 aa).

Cystine bridges form between Cys-239/Cys-241 and Cys-272/Cys-275. The segment at 300-319 is disordered; sequence EVSEEMKKAEEKEKEEKNKK.

It belongs to the HSP33 family. Under oxidizing conditions two disulfide bonds are formed involving the reactive cysteines. Under reducing conditions zinc is bound to the reactive cysteines and the protein is inactive.

It localises to the cytoplasm. Its function is as follows. Redox regulated molecular chaperone. Protects both thermally unfolding and oxidatively damaged proteins from irreversible aggregation. Plays an important role in the bacterial defense system toward oxidative stress. This is 33 kDa chaperonin from Clostridium perfringens (strain ATCC 13124 / DSM 756 / JCM 1290 / NCIMB 6125 / NCTC 8237 / Type A).